The following is a 496-amino-acid chain: Glutamate--tRNA ligase (496 aa).

The short motif at 12 to 22 (PSPTGHLHIGN) is the 'HIGH' region element. A 'KMSKS' region motif is present at residues 259 to 263 (KLSKR). Lys262 lines the ATP pocket.

Belongs to the class-I aminoacyl-tRNA synthetase family. Glutamate--tRNA ligase type 1 subfamily. As to quaternary structure, monomer.

The protein localises to the cytoplasm. The catalysed reaction is tRNA(Glu) + L-glutamate + ATP = L-glutamyl-tRNA(Glu) + AMP + diphosphate. Its function is as follows. Catalyzes the attachment of glutamate to tRNA(Glu) in a two-step reaction: glutamate is first activated by ATP to form Glu-AMP and then transferred to the acceptor end of tRNA(Glu). The sequence is that of Glutamate--tRNA ligase from Lactiplantibacillus plantarum (strain ATCC BAA-793 / NCIMB 8826 / WCFS1) (Lactobacillus plantarum).